We begin with the raw amino-acid sequence, 99 residues long: Sperm protein associated with the nucleus on the X chromosome N4 (99 aa).

Residues 1–10 (MEEPTSSTNE) show a composition bias toward polar residues. The tract at residues 1–99 (MEEPTSSTNE…AGSPQDGGQN (99 aa)) is disordered. A compositionally biased stretch (basic and acidic residues) spans 11–22 (NKMKSPCESNKR). The segment covering 23 to 32 (KVDKKKKNLH) has biased composition (basic residues). Polar residues predominate over residues 64 to 78 (SNQLENNQPTESSTD).

Belongs to the SPAN-X family.

The chain is Sperm protein associated with the nucleus on the X chromosome N4 (SPANXN4) from Homo sapiens (Human).